The sequence spans 691 residues: ATP-dependent RNA helicase MRH4, mitochondrial (691 aa).

The transit peptide at 1 to 31 directs the protein to the mitochondrion; that stretch reads MLIGQVSRLSAIPPLALQHTLRPLHSSSVLA. Residues 31–148 are disordered; the sequence is AAGGKRPKQS…ATMPPNLTPR (118 aa). The span at 39–49 shows a compositional bias: polar residues; sequence QSPSHSRNSPR. Over residues 50–68 the composition is skewed to basic and acidic residues; sequence QKPDWEKRGSNRGRSEQPR. A compositionally biased stretch (low complexity) spans 94–103; the sequence is SDSSSGSSAS. The span at 111–126 shows a compositional bias: polar residues; that stretch reads VPTSSRRLLPFSSSDT. Positions 183-213 match the Q motif motif; sequence RTFDDFGLEEGLVKSLKGLYGEDGKTTPIET. The 209-residue stretch at 225-433 folds into the Helicase ATP-binding domain; it reads ASAPIGSQRV…TTNPFFTKKE (209 aa). Residue 238–245 participates in ATP binding; that stretch reads AETGSGKT. Positions 382–385 match the DEAD box motif; the sequence is DEAD. The Helicase C-terminal domain occupies 474–691; sequence TLAEDAKAAK…VGAMGKRVRT (218 aa). Positions 644 to 667 are disordered; it reads LGEGAKNNKGGKGQGPLKKDGKTA.

The protein belongs to the DEAD box helicase family. MRH4 subfamily.

It is found in the mitochondrion. It carries out the reaction ATP + H2O = ADP + phosphate + H(+). ATP-binding RNA helicase involved in mitochondrial RNA metabolism. Required for maintenance of mitochondrial DNA. This Cryptococcus neoformans var. neoformans serotype D (strain JEC21 / ATCC MYA-565) (Filobasidiella neoformans) protein is ATP-dependent RNA helicase MRH4, mitochondrial (MRH4).